Consider the following 120-residue polypeptide: Small cysteine and glycine repeat-containing protein 2 (120 aa).

The tract at residues 4 to 104 is 19 X 2 AA repeats of CG; it reads CGCGGCGGCG…TCHSCGCGCG (101 aa).

The protein belongs to the KRTAP type 28 family.

Functionally, in the hair cortex, hair keratin intermediate filaments are embedded in an interfilamentous matrix, consisting of hair keratin-associated proteins (KRTAP), which are essential for the formation of a rigid and resistant hair shaft through their extensive disulfide bond cross-linking with abundant cysteine residues of hair keratins. The matrix proteins include the high-sulfur and high-glycine-tyrosine keratins. The chain is Small cysteine and glycine repeat-containing protein 2 from Homo sapiens (Human).